A 204-amino-acid chain; its full sequence is MSAMRLFALTSAMLPLAFILSTSPFPATAAEKNVIVEQRNASSSPKQRLDQLFSQLKRERDPDKASSIANEIRLEWNDSGSATINLLMQWADKAIEEKRNPAALDFLDEAIALKPDYAESWNRRATLNFVMGNYRKSMSDIEHVLNIEPRHFGALSGMAAILSNSGNDQLTLKAWERFLDIYPADRTAQEQVNMLAEKLAGNRT.

The first 29 residues, 1 to 29 (MSAMRLFALTSAMLPLAFILSTSPFPATA), serve as a signal peptide directing secretion. 3 TPR repeats span residues 84–117 (INLL…KPDY), 118–151 (AESW…EPRH), and 153–185 (GALS…YPAD).

In Rhizobium etli (strain ATCC 51251 / DSM 11541 / JCM 21823 / NBRC 15573 / CFN 42), this protein is TPR repeat-containing protein RHE_CH03534.1.